The primary structure comprises 61 residues: Metallothionein-2 (61 aa).

M1 carries the N-acetylmethionine modification. The segment at M1–C29 is beta. A divalent metal cation is bound by residues C5, C7, C13, C15, C19, C21, C24, C26, C29, C33, C34, C36, C37, C41, C44, C48, C50, and C57. The segment at K30–A61 is alpha. Residue S58 is modified to Phosphoserine. C59 and C60 together coordinate a divalent metal cation.

This sequence belongs to the metallothionein superfamily. Type 1 family.

In terms of biological role, metallothioneins have a high content of cysteine residues that bind various heavy metals; these proteins are transcriptionally regulated by both heavy metals and glucocorticoids. The sequence is that of Metallothionein-2 (Mt2) from Rattus norvegicus (Rat).